The chain runs to 301 residues: Negative regulator of the PHO system (301 aa).

Positions 7–297 constitute a Protein kinase domain; the sequence is FKQLERLGNG…AQQALSHPLF (291 aa). ATP contacts are provided by residues 13-21 and K36; that span reads LGNGTYATV. Residue D133 is the Proton acceptor of the active site.

It belongs to the protein kinase superfamily. CMGC Ser/Thr protein kinase family. CDC2/CDKX subfamily. Interacts with a number of cyclins.

The catalysed reaction is L-seryl-[protein] + ATP = O-phospho-L-seryl-[protein] + ADP + H(+). It carries out the reaction L-threonyl-[protein] + ATP = O-phospho-L-threonyl-[protein] + ADP + H(+). Its function is as follows. When phosphate concentrations are high it phosphorylates the PHO4 transcription factor thus establishing repression. The sequence is that of Negative regulator of the PHO system (PHO85) from Eremothecium gossypii (strain ATCC 10895 / CBS 109.51 / FGSC 9923 / NRRL Y-1056) (Yeast).